We begin with the raw amino-acid sequence, 715 residues long: Methionine--tRNA ligase (715 aa).

The short motif at 17 to 27 (PYANGPIHLGH) is the 'HIGH' region element. The Zn(2+) site is built by Cys-148, Cys-151, Cys-161, and Cys-164. Positions 359–363 (KMSKS) match the 'KMSKS' region motif. Lys-362 lines the ATP pocket. A tRNA-binding domain is found at 614–715 (DLSKVELRVG…KDAKPGDRLK (102 aa)).

It belongs to the class-I aminoacyl-tRNA synthetase family. MetG type 1 subfamily. As to quaternary structure, homodimer. Requires Zn(2+) as cofactor.

It is found in the cytoplasm. It carries out the reaction tRNA(Met) + L-methionine + ATP = L-methionyl-tRNA(Met) + AMP + diphosphate. Functionally, is required not only for elongation of protein synthesis but also for the initiation of all mRNA translation through initiator tRNA(fMet) aminoacylation. The polypeptide is Methionine--tRNA ligase (Leptospira interrogans serogroup Icterohaemorrhagiae serovar copenhageni (strain Fiocruz L1-130)).